The primary structure comprises 433 residues: MAQFYSAKRRTTTRQIITVSVNDLDSFGQGVARHNGKTLFIPGLLPQENAEVTVTEDKKQYARAKVVRRLSDSPGRETPRCPHFGVCGGCQQQHASVDLQQRSKSAALARLMKHEVSEVIADVPWGYRRRARLSLNYLPKTQQLQMGFRKAGSSDIVDVKQCPILVPQLEALLPKVMACLGSLQVMRHLGHVELVQATSGTLMILRHTAPLSSADREKLERFSHSEGLDLYLAPDSEILETVSGEMPWYDSNGLRLTFSPRDFIQVNAGVNQKMVARALEWLDVQPEDRVLDLFCGMGNFTLPLATQAASVVGVEGVPALVEKGQQNARLNGLQNVTFYHENLEEDVTKQPWAKNGFDKVLLDPARAGAAGVMQQIIKLEPIRIVYVSCNPATLARDSEALLKAGYTIARLAMLDMFPHTGHLESMVLFSRVK.

Residues 10 to 68 (RTTTRQIITVSVNDLDSFGQGVARHNGKTLFIPGLLPQENAEVTVTEDKKQYARAKVVR) form the TRAM domain. 4 residues coordinate [4Fe-4S] cluster: cysteine 81, cysteine 87, cysteine 90, and cysteine 162. Positions 265, 294, 299, 315, 342, and 363 each coordinate S-adenosyl-L-methionine. Cysteine 389 acts as the Nucleophile in catalysis.

It belongs to the class I-like SAM-binding methyltransferase superfamily. RNA M5U methyltransferase family. RlmD subfamily.

It catalyses the reaction uridine(1939) in 23S rRNA + S-adenosyl-L-methionine = 5-methyluridine(1939) in 23S rRNA + S-adenosyl-L-homocysteine + H(+). Its function is as follows. Catalyzes the formation of 5-methyl-uridine at position 1939 (m5U1939) in 23S rRNA. The sequence is that of 23S rRNA (uracil(1939)-C(5))-methyltransferase RlmD from Shigella sonnei (strain Ss046).